The sequence spans 145 residues: D-aminoacyl-tRNA deacylase (145 aa).

Positions 137–138 (GP) match the Gly-cisPro motif, important for rejection of L-amino acids motif.

This sequence belongs to the DTD family. As to quaternary structure, homodimer.

It localises to the cytoplasm. It carries out the reaction glycyl-tRNA(Ala) + H2O = tRNA(Ala) + glycine + H(+). It catalyses the reaction a D-aminoacyl-tRNA + H2O = a tRNA + a D-alpha-amino acid + H(+). An aminoacyl-tRNA editing enzyme that deacylates mischarged D-aminoacyl-tRNAs. Also deacylates mischarged glycyl-tRNA(Ala), protecting cells against glycine mischarging by AlaRS. Acts via tRNA-based rather than protein-based catalysis; rejects L-amino acids rather than detecting D-amino acids in the active site. By recycling D-aminoacyl-tRNA to D-amino acids and free tRNA molecules, this enzyme counteracts the toxicity associated with the formation of D-aminoacyl-tRNA entities in vivo and helps enforce protein L-homochirality. This is D-aminoacyl-tRNA deacylase from Cronobacter sakazakii (strain ATCC BAA-894) (Enterobacter sakazakii).